A 469-amino-acid chain; its full sequence is tRNA(Ile)-lysidine synthase (469 aa).

Residue 26-31 participates in ATP binding; the sequence is SGGPDS.

Belongs to the tRNA(Ile)-lysidine synthase family.

The protein localises to the cytoplasm. It carries out the reaction cytidine(34) in tRNA(Ile2) + L-lysine + ATP = lysidine(34) in tRNA(Ile2) + AMP + diphosphate + H(+). Its function is as follows. Ligates lysine onto the cytidine present at position 34 of the AUA codon-specific tRNA(Ile) that contains the anticodon CAU, in an ATP-dependent manner. Cytidine is converted to lysidine, thus changing the amino acid specificity of the tRNA from methionine to isoleucine. The polypeptide is tRNA(Ile)-lysidine synthase (Shouchella clausii (strain KSM-K16) (Alkalihalobacillus clausii)).